The sequence spans 170 residues: MAQIRIHEINTRIENEVEVSKFLQEEGVLYEKWNISKLPTHLKENYSLTDENKAEILAVFSKEIADVSSRRGYKAHDVISLSNSTPNLDELLINFQKEHHHTDDEVRFIVSGHGIFAIEGKDGTFFDVELEPGDLISVPENARHYFTLQDDRQVVAIRIFVTTEGWVPIY.

Residues His99, His101, Glu105, and His144 each contribute to the Fe(2+) site. Ni(2+)-binding residues include His99, His101, Glu105, and His144.

The protein belongs to the acireductone dioxygenase (ARD) family. Monomer. It depends on Fe(2+) as a cofactor. The cofactor is Ni(2+).

The enzyme catalyses 1,2-dihydroxy-5-(methylsulfanyl)pent-1-en-3-one + O2 = 3-(methylsulfanyl)propanoate + CO + formate + 2 H(+). It catalyses the reaction 1,2-dihydroxy-5-(methylsulfanyl)pent-1-en-3-one + O2 = 4-methylsulfanyl-2-oxobutanoate + formate + 2 H(+). It participates in amino-acid biosynthesis; L-methionine biosynthesis via salvage pathway; L-methionine from S-methyl-5-thio-alpha-D-ribose 1-phosphate: step 5/6. In terms of biological role, catalyzes 2 different reactions between oxygen and the acireductone 1,2-dihydroxy-3-keto-5-methylthiopentene (DHK-MTPene) depending upon the metal bound in the active site. Fe-containing acireductone dioxygenase (Fe-ARD) produces formate and 2-keto-4-methylthiobutyrate (KMTB), the alpha-ketoacid precursor of methionine in the methionine recycle pathway. Ni-containing acireductone dioxygenase (Ni-ARD) produces methylthiopropionate, carbon monoxide and formate, and does not lie on the methionine recycle pathway. The chain is Acireductone dioxygenase from Bacillus cereus (strain ATCC 10987 / NRS 248).